Consider the following 634-residue polypeptide: DNA-directed RNA polymerase subunit gamma (634 aa).

Zn(2+)-binding residues include Cys-74, Cys-76, Cys-89, and Cys-92. Asp-471, Asp-473, and Asp-475 together coordinate Mg(2+).

It belongs to the RNA polymerase beta' chain family. RpoC1 subfamily. In terms of assembly, in cyanobacteria the RNAP catalytic core is composed of 2 alpha, 1 beta, 1 beta', 1 gamma and 1 omega subunit. When a sigma factor is associated with the core the holoenzyme is formed, which can initiate transcription. The cofactor is Mg(2+). Zn(2+) is required as a cofactor.

It catalyses the reaction RNA(n) + a ribonucleoside 5'-triphosphate = RNA(n+1) + diphosphate. Its function is as follows. DNA-dependent RNA polymerase catalyzes the transcription of DNA into RNA using the four ribonucleoside triphosphates as substrates. In Prochlorococcus marinus (strain MIT 9313), this protein is DNA-directed RNA polymerase subunit gamma.